Reading from the N-terminus, the 463-residue chain is MAPSATLPLTTAILAIGRLVAAQQPGTSTPEVHPKLTTYKCTTSGGCVAQDTSVVLDWNYRWMHDANYNSCTVNGGVNTTLCPDEATCGKNCYIEGVDYAASGVTASGSTLTLNQYMPSSSGGYSSVSPRLYLLGPDGEYVMLKLNGQELSFDVDLSALPCGENGSLYLSQMDENGGANQYNTAGANYGSGYCDAQCPVQTWRNGTLNTSGQGFCCNEMDILEGNSRANALTPHSCTATACDSAGCGFNPYGSGYPNYFGPGDTVDTSKTFTIITQFNTDNGSPSGNLVSITRKYRQNGVDIPSAKPGGDTISSCPSASAYGGLATMGKALSSGMVLVFSIWNDNSQYMNWLDSGRAGPCSSTEGNPSNILANNPGTHVVYSNIRWGDIGSTTNSTGGNPPPPPPPASSTTFSTTRRSSTTSSSPSCTQTHWGQCGGIGYTGCKTCTSGTTCQYGNDYYSQCL.

The first 22 residues, 1-22, serve as a signal peptide directing secretion; the sequence is MAPSATLPLTTAILAIGRLVAA. The segment at 23-397 is catalytic; sequence QQPGTSTPEV…DIGSTTNSTG (375 aa). Asn-78, Asn-164, Asn-204, and Asn-208 each carry an N-linked (GlcNAc...) asparagine glycan. Catalysis depends on Glu-218, which acts as the Nucleophile. Catalysis depends on Glu-223, which acts as the Proton donor. Residues 390-429 form a disordered region; the sequence is GSTTNSTGGNPPPPPPPASSTTFSTTRRSSTTSSSPSCTQ. The N-linked (GlcNAc...) asparagine glycan is linked to Asn-394. A linker region spans residues 402–427; sequence PPPPPASSTTFSTTRRSSTTSSSPSC. A compositionally biased stretch (low complexity) spans 408 to 429; sequence SSTTFSTTRRSSTTSSSPSCTQ. The region spanning 427 to 463 is the CBM1 domain; the sequence is CTQTHWGQCGGIGYTGCKTCTSGTTCQYGNDYYSQCL. Intrachain disulfides connect Cys-435–Cys-452 and Cys-446–Cys-462.

The protein belongs to the glycosyl hydrolase 7 (cellulase C) family.

Its subcellular location is the secreted. It carries out the reaction Endohydrolysis of (1-&gt;4)-beta-D-glucosidic linkages in cellulose, lichenin and cereal beta-D-glucans.. The biological conversion of cellulose to glucose generally requires three types of hydrolytic enzymes: (1) Endoglucanases which cut internal beta-1,4-glucosidic bonds; (2) Exocellobiohydrolases that cut the disaccharide cellobiose from the non-reducing end of the cellulose polymer chain; (3) Beta-1,4-glucosidases which hydrolyze the cellobiose and other short cello-oligosaccharides to glucose. This chain is Endoglucanase EG-1 (egl1), found in Trichoderma longibrachiatum.